Reading from the N-terminus, the 75-residue chain is uncharacterized protein (75 aa).

The N-terminal stretch at 1 to 19 (MQCVCLCVFVLLLAGCVTS) is a signal peptide.

In terms of tissue distribution, nacreous layer of shell (at protein level).

Its subcellular location is the secreted. This is an uncharacterized protein from Margaritifera margaritifera (Freshwater pearl mussel).